Here is a 179-residue protein sequence, read N- to C-terminus: NADH-quinone oxidoreductase subunit B (179 aa).

[4Fe-4S] cluster contacts are provided by C53, C54, C118, and C148.

The protein belongs to the complex I 20 kDa subunit family. NDH-1 is composed of 14 different subunits. Subunits NuoB, C, D, E, F, and G constitute the peripheral sector of the complex. Requires [4Fe-4S] cluster as cofactor.

It localises to the cell membrane. It carries out the reaction a quinone + NADH + 5 H(+)(in) = a quinol + NAD(+) + 4 H(+)(out). Functionally, NDH-1 shuttles electrons from NADH, via FMN and iron-sulfur (Fe-S) centers, to quinones in the respiratory chain. The immediate electron acceptor for the enzyme in this species is believed to be a menaquinone. Couples the redox reaction to proton translocation (for every two electrons transferred, four hydrogen ions are translocated across the cytoplasmic membrane), and thus conserves the redox energy in a proton gradient. In Bacillus thuringiensis (strain Al Hakam), this protein is NADH-quinone oxidoreductase subunit B.